We begin with the raw amino-acid sequence, 302 residues long: Protein NEOXANTHIN-DEFICIENT 1 (302 aa).

In terms of biological role, required for neoxanthin biosynthesis. Probably not involved directly in the enzymatic conversion of violaxanthin to neoxanthin. Is necessary but not sufficient for neoxanthin synthesis. The chain is Protein NEOXANTHIN-DEFICIENT 1 from Oryza sativa subsp. japonica (Rice).